Here is an 89-residue protein sequence, read N- to C-terminus: uncharacterized protein (89 aa).

This is an uncharacterized protein from Dictyostelium discoideum (Social amoeba).